Here is a 288-residue protein sequence, read N- to C-terminus: Probable anion import ATP-binding protein HVO_1886 (288 aa).

The segment covering Met1–Glu18 has biased composition (basic and acidic residues). Residues Met1–Lys33 are disordered. The ABC transporter domain occupies Leu36–Val282. Gly68–Thr75 serves as a coordination point for ATP.

This sequence belongs to the ABC transporter superfamily. The complex is composed of two ATP-binding proteins (HVO_1886), two transmembrane proteins (HVO_1887) and a solute-binding protein (HVO_1888).

Its subcellular location is the cell membrane. Its function is as follows. Part of an ABC transporter complex involved in anions import. Responsible for energy coupling to the transport system. This Haloferax volcanii (strain ATCC 29605 / DSM 3757 / JCM 8879 / NBRC 14742 / NCIMB 2012 / VKM B-1768 / DS2) (Halobacterium volcanii) protein is Probable anion import ATP-binding protein HVO_1886.